We begin with the raw amino-acid sequence, 578 residues long: Probable nucleoredoxin 1 (578 aa).

Thioredoxin domains are found at residues 18-172 (SLLS…RARR), 178-321 (SVLV…EKFQ), and 325-485 (ELEK…EIEA).

This sequence belongs to the nucleoredoxin family.

It carries out the reaction [protein]-dithiol + NAD(+) = [protein]-disulfide + NADH + H(+). The enzyme catalyses [protein]-dithiol + NADP(+) = [protein]-disulfide + NADPH + H(+). In terms of biological role, probable thiol-disulfide oxidoreductase required for pollen tube growth and pollen function in the pistil. Seems not to be required for in vitro pollen tube growth. May be involved in the generation of lipid signaling molecules in pistil. In Arabidopsis thaliana (Mouse-ear cress), this protein is Probable nucleoredoxin 1.